A 335-amino-acid polypeptide reads, in one-letter code: Phospho-N-acetylmuramoyl-pentapeptide-transferase (335 aa).

10 helical membrane passes run 5–25 (IFLA…LMIP), 50–70 (TPTM…LIMA), 78–98 (MVMV…DDFI), 114–133 (LIGQ…RYLG), 145–165 (IHLE…VGIT), 177–197 (LAAG…TLAA), 200–220 (GGGV…AAAV), 236–256 (VFMG…LAVL), 262–282 (ILLI…LQVF), and 311–331 (VVMV…IAYM).

This sequence belongs to the glycosyltransferase 4 family. MraY subfamily. Requires Mg(2+) as cofactor.

The protein resides in the cell membrane. It catalyses the reaction UDP-N-acetyl-alpha-D-muramoyl-L-alanyl-gamma-D-glutamyl-meso-2,6-diaminopimeloyl-D-alanyl-D-alanine + di-trans,octa-cis-undecaprenyl phosphate = di-trans,octa-cis-undecaprenyl diphospho-N-acetyl-alpha-D-muramoyl-L-alanyl-D-glutamyl-meso-2,6-diaminopimeloyl-D-alanyl-D-alanine + UMP. It participates in cell wall biogenesis; peptidoglycan biosynthesis. In terms of biological role, catalyzes the initial step of the lipid cycle reactions in the biosynthesis of the cell wall peptidoglycan: transfers peptidoglycan precursor phospho-MurNAc-pentapeptide from UDP-MurNAc-pentapeptide onto the lipid carrier undecaprenyl phosphate, yielding undecaprenyl-pyrophosphoryl-MurNAc-pentapeptide, known as lipid I. The protein is Phospho-N-acetylmuramoyl-pentapeptide-transferase of Desulfitobacterium hafniense (strain DSM 10664 / DCB-2).